The chain runs to 672 residues: DNA ligase (672 aa).

NAD(+)-binding positions include 34–38 (DAEYD), 83–84 (SL), and Glu117. Lys119 acts as the N6-AMP-lysine intermediate in catalysis. Residues Arg140, Glu177, Lys293, and Lys317 each coordinate NAD(+). Zn(2+)-binding residues include Cys411, Cys414, Cys429, and Cys434. Residues 591 to 672 (RVGGRFTGKT…FLAMLGVCRT (82 aa)) enclose the BRCT domain.

Belongs to the NAD-dependent DNA ligase family. LigA subfamily. The cofactor is Mg(2+). Requires Mn(2+) as cofactor.

It carries out the reaction NAD(+) + (deoxyribonucleotide)n-3'-hydroxyl + 5'-phospho-(deoxyribonucleotide)m = (deoxyribonucleotide)n+m + AMP + beta-nicotinamide D-nucleotide.. In terms of biological role, DNA ligase that catalyzes the formation of phosphodiester linkages between 5'-phosphoryl and 3'-hydroxyl groups in double-stranded DNA using NAD as a coenzyme and as the energy source for the reaction. It is essential for DNA replication and repair of damaged DNA. This chain is DNA ligase, found in Geotalea uraniireducens (strain Rf4) (Geobacter uraniireducens).